The primary structure comprises 144 residues: Large ribosomal subunit protein uL14 (144 aa).

Belongs to the universal ribosomal protein uL14 family. In terms of assembly, part of the 50S ribosomal subunit. Forms a cluster with proteins L3 and L24e, part of which may contact the 16S rRNA in 2 intersubunit bridges.

Its function is as follows. Binds to 23S rRNA. Forms part of two intersubunit bridges in the 70S ribosome. The polypeptide is Large ribosomal subunit protein uL14 (Caldivirga maquilingensis (strain ATCC 700844 / DSM 13496 / JCM 10307 / IC-167)).